The chain runs to 133 residues: Peptide methionine sulfoxide reductase MsrB (133 aa).

The region spanning 8–130 (LEEWRAMLDP…NSVCLDFKPR (123 aa)) is the MsrB domain. The Zn(2+) site is built by Cys-47, Cys-50, Cys-96, and Cys-99. Cys-119 serves as the catalytic Nucleophile.

It belongs to the MsrB Met sulfoxide reductase family. Zn(2+) serves as cofactor.

It carries out the reaction L-methionyl-[protein] + [thioredoxin]-disulfide + H2O = L-methionyl-(R)-S-oxide-[protein] + [thioredoxin]-dithiol. The polypeptide is Peptide methionine sulfoxide reductase MsrB (Pseudomonas putida (strain W619)).